The sequence spans 324 residues: Fe-S cluster assembly protein dre2 (324 aa).

Residues 28-158 are N-terminal SAM-like domain; it reads GSPSKRTLLL…KMDQPKSFAI (131 aa). The interval 159–217 is linker; the sequence is PLRRNGKKKDAAKTETFAPAPAPAPPVQPVTVGMINNDDDYENDDDLIDEDTLLSDEDL. Positions 226, 237, 240, and 242 each coordinate [2Fe-2S] cluster. The segment at 226-242 is fe-S binding site A; the sequence is CQPKPGRRRRACKDCTC. Positions 287, 290, 298, and 301 each coordinate [4Fe-4S] cluster. 2 short sequence motifs (cx2C motif) span residues 287 to 290 and 298 to 301; these read CGNC and CAGC. A fe-S binding site B region spans residues 287–301; that stretch reads CGNCALGDAFRCAGC.

This sequence belongs to the anamorsin family. Monomer. Interacts with tah18. Interacts with mia40. It depends on [2Fe-2S] cluster as a cofactor. [4Fe-4S] cluster is required as a cofactor.

The protein resides in the cytoplasm. It is found in the mitochondrion intermembrane space. Component of the cytosolic iron-sulfur (Fe-S) protein assembly (CIA) machinery required for the maturation of extramitochondrial Fe-S proteins. Part of an electron transfer chain functioning in an early step of cytosolic Fe-S biogenesis, facilitating the de novo assembly of a [4Fe-4S] cluster on the scaffold complex cfd1-nbp35. Electrons are transferred to dre2 from NADPH via the FAD- and FMN-containing protein tah18. Tah18-dre2 are also required for the assembly of the diferric tyrosyl radical cofactor of ribonucleotide reductase (RNR), probably by providing electrons for reduction during radical cofactor maturation in the catalytic small subunit rnr2. The polypeptide is Fe-S cluster assembly protein dre2 (Aspergillus niger (strain ATCC MYA-4892 / CBS 513.88 / FGSC A1513)).